A 143-amino-acid chain; its full sequence is Hemoglobin subunit alpha-2 (143 aa).

Ser-2 is subject to N-acetylserine. Residues 2–143 (SLSSKQKATV…LALALAEKYR (142 aa)) form the Globin domain. His-60 contacts O2. His-89 is a binding site for heme b.

The protein belongs to the globin family. Hb 2 is a heterotetramer of two alpha-2 and two beta-2 chains. As to expression, red blood cells.

Functionally, involved in oxygen transport from gills to the various peripheral tissues. The sequence is that of Hemoglobin subunit alpha-2 (hba2) from Gadus morhua (Atlantic cod).